A 456-amino-acid chain; its full sequence is F-box/FBD/LRR-repeat protein At1g13780 (456 aa).

Residues 9–55 enclose the F-box domain; sequence FDRISELPESLISQILLHLPTKASVKTSVLSTRWKNLWLNVPGLDLN. LRR repeat units lie at residues 197 to 220, 243 to 266, 302 to 325, and 355 to 379; these read LEELIYLHDDKLVVTRVRSRSLKR, APGLEYMSLKADHFDRIVVKNLTS, ISSVRHMVISHNTVKALDLYSKVG, and FPNLKHLILETECPVEVMEKFELVN. The region spanning 372-424 is the FBD domain; it reads MEKFELVNVPRCFVSTLEHVEIKGLFDWGEQDMKIASYFLENSAVLKKLILSF.

The protein is F-box/FBD/LRR-repeat protein At1g13780 of Arabidopsis thaliana (Mouse-ear cress).